The primary structure comprises 313 residues: Olfactory receptor 4E2 (313 aa).

Residues 1-25 (MDSLNQTRVTEFVFLGLTDNRVLEM) are Extracellular-facing. Asparagine 5 carries an N-linked (GlcNAc...) asparagine glycan. The helical transmembrane segment at 26–49 (LFFMAFSAIYMLTLSGNILIIIAT) threads the bilayer. The Cytoplasmic portion of the chain corresponds to 50 to 57 (VFTPSLHT). The chain crosses the membrane as a helical span at residues 58-79 (PMYFFLSNLSFIDICHSSVTVP). Residues 80-100 (KMLEGLLLERKTISFDNCITQ) lie on the Extracellular side of the membrane. Cysteine 97 and cysteine 179 form a disulfide bridge. Residues 101 to 120 (LFFLHLFACAEIFLLIIVAY) traverse the membrane as a helical segment. Histidine 105 and cysteine 109 together coordinate Cu cation. The Cytoplasmic segment spans residues 121–139 (DRYVAICTPLHYPNVMNMR). The chain crosses the membrane as a helical span at residues 140 to 158 (VCIQLVFALWLGGTVHSLG). Residues 159-195 (QTFLTIRLPYCGPNIIDSYFCDVPLVIKLACTDTYLT) lie on the Extracellular side of the membrane. Residues 196–219 (GILIVTNSGTISLSCFLAVVTSYM) traverse the membrane as a helical segment. Residues 220 to 235 (VILVSLRKHSAEGRQK) are Cytoplasmic-facing. A helical membrane pass occupies residues 236-258 (ALSTCSAHFMVVALFFGPCIFIY). Residues 259 to 269 (TRPDTSFSIDK) are Extracellular-facing. Arginine 260 lines the Cu cation pocket. A helical transmembrane segment spans residues 270-289 (VVSVFYTVVTPLLNPFIYTL). At 290 to 313 (RNEEVKSAMKQLRQRQVFFTKSYT) the chain is on the cytoplasmic side.

It belongs to the G-protein coupled receptor 1 family.

It is found in the cell membrane. Copper binding enhances receptor activity in response to odorant binding. Olfactory receptor that is activated by the binding of organosulfur odorants with thioether groups such as (methylthio)methanethiol (MTMT) and bis(methylthiomethyl) disulfide. Also binds odorants cis-cyclooctene and tert-butyl mercaptan. The activity of this receptor is mediated by G proteins which activate adenylyl cyclase. This Homo sapiens (Human) protein is Olfactory receptor 4E2.